We begin with the raw amino-acid sequence, 126 residues long: Protein ApaG (126 aa).

Positions 2-126 (SDTQHQVNVR…FRLAVPGALH (125 aa)) constitute an ApaG domain.

This is Protein ApaG from Pseudomonas paraeruginosa (strain DSM 24068 / PA7) (Pseudomonas aeruginosa (strain PA7)).